The sequence spans 575 residues: Serine/threonine-protein phosphatase 2A regulatory subunit B'' subunit beta (575 aa).

A disordered region spans residues Ala41–Pro131. The EF-hand domain occupies Lys388–Arg423. Ca(2+) contacts are provided by Asp401, Asp403, Asp405, and Glu412.

In terms of assembly, PP2A consists of a common heterodimeric core enzyme, composed of a 36 kDa catalytic subunit (subunit C) and a 65 kDa constant regulatory subunit (PR65 or subunit A), that associates with a variety of regulatory subunits. Proteins that associate with the core dimer include three families of regulatory subunits B (the R2/B/PR55/B55, R3/B''/PR72/PR130/PR59 and R5/B'/B56 families), the 48 kDa variable regulatory subunit, viral proteins, and cell signaling molecules. Interacts with N-terminal region of CDC6. Interacts with NOD2.

Its subcellular location is the nucleus. In terms of biological role, the B regulatory subunit might modulate substrate selectivity and catalytic activity, and might also direct the localization of the catalytic enzyme to a particular subcellular compartment. This is Serine/threonine-protein phosphatase 2A regulatory subunit B'' subunit beta (PPP2R3B) from Homo sapiens (Human).